Here is a 358-residue protein sequence, read N- to C-terminus: Peptide chain release factor 1 (358 aa).

Gln237 carries the post-translational modification N5-methylglutamine.

It belongs to the prokaryotic/mitochondrial release factor family. Post-translationally, methylated by PrmC. Methylation increases the termination efficiency of RF1.

The protein resides in the cytoplasm. In terms of biological role, peptide chain release factor 1 directs the termination of translation in response to the peptide chain termination codons UAG and UAA. This chain is Peptide chain release factor 1, found in Mycoplasma mobile (strain ATCC 43663 / 163K / NCTC 11711) (Mesomycoplasma mobile).